The chain runs to 671 residues: UvrABC system protein B (671 aa).

The Helicase ATP-binding domain occupies 25 to 412 (EGIEAGLSHQ…AGRVVEQVVR (388 aa)). An ATP-binding site is contributed by 38–45 (GVTGSGKT). The Beta-hairpin signature appears at 91 to 114 (YYDYYQPEAYVPSSDTFIEKDASI). The Helicase C-terminal domain occupies 429–582 (QVDDLLSEIR…QIAFNEANGI (154 aa)). The region spanning 632–667 (TKRIKQLEEKMMQFARDLEFEAAAQLRDEIAQLRER) is the UVR domain.

This sequence belongs to the UvrB family. Forms a heterotetramer with UvrA during the search for lesions. Interacts with UvrC in an incision complex.

It is found in the cytoplasm. Its function is as follows. The UvrABC repair system catalyzes the recognition and processing of DNA lesions. A damage recognition complex composed of 2 UvrA and 2 UvrB subunits scans DNA for abnormalities. Upon binding of the UvrA(2)B(2) complex to a putative damaged site, the DNA wraps around one UvrB monomer. DNA wrap is dependent on ATP binding by UvrB and probably causes local melting of the DNA helix, facilitating insertion of UvrB beta-hairpin between the DNA strands. Then UvrB probes one DNA strand for the presence of a lesion. If a lesion is found the UvrA subunits dissociate and the UvrB-DNA preincision complex is formed. This complex is subsequently bound by UvrC and the second UvrB is released. If no lesion is found, the DNA wraps around the other UvrB subunit that will check the other stand for damage. This is UvrABC system protein B from Pseudomonas putida (strain ATCC 47054 / DSM 6125 / CFBP 8728 / NCIMB 11950 / KT2440).